The chain runs to 495 residues: ATP synthase subunit beta, chloroplastic (495 aa).

172-179 (GGAGVGKT) is a binding site for ATP.

Belongs to the ATPase alpha/beta chains family. As to quaternary structure, F-type ATPases have 2 components, CF(1) - the catalytic core - and CF(0) - the membrane proton channel. CF(1) has five subunits: alpha(3), beta(3), gamma(1), delta(1), epsilon(1). CF(0) has four main subunits: a(1), b(1), b'(1) and c(9-12).

Its subcellular location is the plastid. It is found in the chloroplast thylakoid membrane. It carries out the reaction ATP + H2O + 4 H(+)(in) = ADP + phosphate + 5 H(+)(out). Functionally, produces ATP from ADP in the presence of a proton gradient across the membrane. The catalytic sites are hosted primarily by the beta subunits. The chain is ATP synthase subunit beta, chloroplastic from Brimeura amethystina (Spanish hyacinth).